The following is a 135-amino-acid chain: ATP synthase epsilon chain (135 aa).

It belongs to the ATPase epsilon chain family. F-type ATPases have 2 components, CF(1) - the catalytic core - and CF(0) - the membrane proton channel. CF(1) has five subunits: alpha(3), beta(3), gamma(1), delta(1), epsilon(1). CF(0) has three main subunits: a, b and c.

It localises to the cell inner membrane. In terms of biological role, produces ATP from ADP in the presence of a proton gradient across the membrane. This chain is ATP synthase epsilon chain, found in Rhizobium rhizogenes (strain K84 / ATCC BAA-868) (Agrobacterium radiobacter).